We begin with the raw amino-acid sequence, 297 residues long: Homoserine kinase (297 aa).

82–92 (PLTRGLGSSAS) contacts ATP.

This sequence belongs to the GHMP kinase family. Homoserine kinase subfamily.

It is found in the cytoplasm. It catalyses the reaction L-homoserine + ATP = O-phospho-L-homoserine + ADP + H(+). Its pathway is amino-acid biosynthesis; L-threonine biosynthesis; L-threonine from L-aspartate: step 4/5. Its function is as follows. Catalyzes the ATP-dependent phosphorylation of L-homoserine to L-homoserine phosphate. The protein is Homoserine kinase of Bacillus mycoides (strain KBAB4) (Bacillus weihenstephanensis).